The sequence spans 304 residues: uncharacterized protein (304 aa).

A signal peptide spans 1 to 22 (MKKSLTLLILLLCSLLFSTVLS). Residues 91 to 111 (PAPAPTPESSDPDEPMKPDDS) form a disordered region. N-linked (GlcNAc...) asparagine glycans are attached at residues Asn133, Asn160, Asn183, and Asn233. Ser282 is lipidated: GPI-anchor amidated serine. The propeptide at 283-304 (SSHLFGVLPFLPLVLCIFLFLL) is removed in mature form.

The protein localises to the cell membrane. This is an uncharacterized protein from Arabidopsis thaliana (Mouse-ear cress).